A 186-amino-acid polypeptide reads, in one-letter code: Mating-type-like protein ALPHA2 (186 aa).

Residues 108 to 170 (ASYRGHRFTR…NRRRKQKSIY (63 aa)) constitute a DNA-binding region (homeobox; TALE-type).

This sequence belongs to the TALE/M-ATYP homeobox family.

The protein resides in the nucleus. Functionally, mating type proteins are sequence specific DNA-binding proteins that act as master switches in yeast differentiation by controlling gene expression in a cell type-specific fashion. In Candida glabrata (strain ATCC 2001 / BCRC 20586 / JCM 3761 / NBRC 0622 / NRRL Y-65 / CBS 138) (Yeast), this protein is Mating-type-like protein ALPHA2 (MTL1ALPHA2).